The sequence spans 514 residues: Threonine synthase (514 aa).

Residue K117 is modified to N6-(pyridoxal phosphate)lysine. G270, N271, F272, and D274 together coordinate pyridoxal 5'-phosphate. 2 positions are modified to phosphoserine: S319 and S321. T449 serves as a coordination point for pyridoxal 5'-phosphate.

It belongs to the threonine synthase family. The cofactor is pyridoxal 5'-phosphate.

The enzyme catalyses O-phospho-L-homoserine + H2O = L-threonine + phosphate. It functions in the pathway amino-acid biosynthesis; L-threonine biosynthesis; L-threonine from L-aspartate: step 5/5. Catalyzes the gamma-elimination of phosphate from L-phosphohomoserine and the beta-addition of water to produce L-threonine. The protein is Threonine synthase (thrc) of Schizosaccharomyces pombe (strain 972 / ATCC 24843) (Fission yeast).